The primary structure comprises 851 residues: Putative serine/threonine-protein kinase 019R (851 aa).

5 disordered regions span residues 1–24 (MATNYCDEFERNPTRNPRTGRTIK), 61–91 (PRVAAASPCPEFARDPTRNPRTGRPIKRGGP), 104–160 (GGAS…KRGG), 190–216 (GLSPFRSHMRKSPARRSPARRSPARRS), and 340–400 (SRPS…GEPR). Over residues 125-141 (ARRQSPAEAAEASPCPE) the composition is skewed to low complexity. Residues 196–216 (SHMRKSPARRSPARRSPARRS) are compositionally biased toward basic residues. A compositionally biased stretch (low complexity) spans 340 to 366 (SRPSGVSRTSGTSGSSGSSASSRPPNS). The Protein kinase domain maps to 456–851 (AVSDNVIGQG…GEREIESFTM (396 aa)). Residues 462 to 470 (IGQGSWGSV) and lysine 485 contribute to the ATP site. The Proton acceptor role is filled by aspartate 608.

This sequence belongs to the protein kinase superfamily. Ser/Thr protein kinase family.

It carries out the reaction L-seryl-[protein] + ATP = O-phospho-L-seryl-[protein] + ADP + H(+). The catalysed reaction is L-threonyl-[protein] + ATP = O-phospho-L-threonyl-[protein] + ADP + H(+). In Dryophytes versicolor (chameleon treefrog), this protein is Putative serine/threonine-protein kinase 019R.